Here is a 310-residue protein sequence, read N- to C-terminus: Cytochrome P450 monooxygenase ppzG (310 aa).

Position 288 (Cys-288) interacts with heme.

This sequence belongs to the cytochrome P450 family. The cofactor is heme.

It functions in the pathway secondary metabolite biosynthesis. Its function is as follows. Cytochrome P450 monooxygenase; part of the gene cluster that mediates the biosynthesis of pyrrolopyrazines, secondary metabolites showing insecticidal activity. The role of ppzG within the pathway has still to be determined. The single multifunctional NRPS ppzA is sufficient to produce peramine via condensation of 1-pyrroline-5-carboxylate and arginine, N-methylation of the alpha-amino group of arginine and reduction of the thioester and the cyclization to form an iminium ion resulting in release from the peptide synthetase. Deprotonation of this intermediate and oxidation of the pyrroline ring would give rise to peramine. In Epichloe species that produce only peramine, the peramine synthetase gene is not localized in a gene cluster, in contrast to Metarhizium species that contain additional pyrrolopyrazine biosynthesis genes. The 2-oxoglutarate-Fe(II) type oxidoreductase ppzC hydroxylates peramine to yield the newly identified compound 8-hydroxyperamine whereas ppzD converts L-proline into trans-4-hydroxy-L-proline, a precursor of peramine biosynthesis. The chain is Cytochrome P450 monooxygenase ppzG (ppzG) from Metarhizium majus (strain ARSEF 297).